Consider the following 350-residue polypeptide: 2-oxoglutarate-dependent ethylene/succinate-forming enzyme (350 aa).

The 121-residue stretch at 166–286 (GWHHMRVLRF…RFACAYFHEP (121 aa)) folds into the Fe2OG dioxygenase domain. Residues His189 and His268 each coordinate Fe cation.

Belongs to the iron/ascorbate-dependent oxidoreductase family. As to quaternary structure, monomer. Requires Fe(2+) as cofactor.

It catalyses the reaction 2-oxoglutarate + O2 + 2 H(+) = ethene + 3 CO2 + H2O. The enzyme catalyses L-arginine + 2-oxoglutarate + O2 = guanidine + L-glutamate 5-semialdehyde + succinate + CO2. Its pathway is alkene biosynthesis; ethylene biosynthesis via 2-oxoglutarate. Its activity is regulated as follows. Activated by catalase. Inhibited by chelating reagents such as EDTA and Tiron (4,5-dihydroxy-1,3-benzene disulphonic acid), and by DTNB (5,5'-dithio-bis-2-nitrobenzoate) and hydrogen peroxide. Simultaneously catalyzes two reactions, namely formation of ethylene and of succinate from 2-oxoglutarate, with a molar ratio of 2:1. The chain is 2-oxoglutarate-dependent ethylene/succinate-forming enzyme (efe) from Pseudomonas savastanoi pv. phaseolicola (Pseudomonas syringae pv. phaseolicola).